The sequence spans 101 residues: Movement protein (101 aa).

The chain crosses the membrane as a helical span at residues E30–L50. The disordered stretch occupies residues P80 to G101. Residues P90 to G101 are compositionally biased toward pro residues.

This sequence belongs to the mastrevirus movement protein family. Interacts with the capsid protein (CP). Part of a MP-CP-viral DNA complex.

It is found in the host membrane. Its function is as follows. Involved in the viral transport within, and between cells. This Avena sativa (Oat) protein is Movement protein.